A 246-amino-acid chain; its full sequence is DNA repair protein RecO (246 aa).

The protein belongs to the RecO family.

Functionally, involved in DNA repair and RecF pathway recombination. This chain is DNA repair protein RecO, found in Methylorubrum extorquens (strain CM4 / NCIMB 13688) (Methylobacterium extorquens).